We begin with the raw amino-acid sequence, 647 residues long: Probable inactive receptor kinase RLK902 (647 aa).

The N-terminal stretch at 1 to 29 (MRLFFTPSMSNLSIFFSILLLSLPLPSIG) is a signal peptide. 5 LRR repeats span residues 69 to 93 (GGRV…IFGN), 94 to 118 (LTQL…LGSC), 119 to 142 (SDLR…LFSL), 144 to 165 (NLVR…GFKN), and 166 to 192 (LTRL…SLDQ). Residues 268 to 288 (GIVIGCVVGLSLIVMILMVLF) traverse the membrane as a helical segment. The 275-residue stretch at 365–639 (RASAEVLGKG…EVVRRIQELR (275 aa)) folds into the Protein kinase domain. The residue at position 367 (S367) is a Phosphoserine. 371-379 (LGKGTFGTA) serves as a coordination point for ATP. A Phosphothreonine modification is found at T388. K393 serves as a coordination point for ATP. S444 carries the post-translational modification Phosphoserine. Residue T520 is modified to Phosphothreonine. Position 540 is a phosphoserine (S540). T618 is modified (phosphothreonine).

The protein belongs to the protein kinase superfamily. Ser/Thr protein kinase family. Interacts with At3g17950, At3g27210 and At5g05190. In terms of processing, autophosphorylation. In terms of tissue distribution, expressed in root tips, lateral root primordia, stipules, and floral organ abscission zones.

Its subcellular location is the cell membrane. The protein is Probable inactive receptor kinase RLK902 (RLK902) of Arabidopsis thaliana (Mouse-ear cress).